Here is a 438-residue protein sequence, read N- to C-terminus: Exosome complex component RRP45 (438 aa).

Ser65 carries the phosphoserine modification. Residue Lys297 is modified to N6-acetyllysine; alternate. Residue Lys297 forms a Glycyl lysine isopeptide (Lys-Gly) (interchain with G-Cter in SUMO1); alternate linkage. Lys297 is covalently cross-linked (Glycyl lysine isopeptide (Lys-Gly) (interchain with G-Cter in SUMO2); alternate). 2 positions are modified to phosphoserine: Ser306 and Ser346. 2 disordered regions span residues 337–365 (AQIGDGIENSWGDLEDSEKEEEEEEGGID) and 377–438 (TGEV…RTAN). The span at 349 to 364 (DLEDSEKEEEEEEGGI) shows a compositional bias: acidic residues. Ser393 and Ser395 each carry phosphoserine. The span at 427 to 438 (QGKRKKKKRTAN) shows a compositional bias: basic residues.

This sequence belongs to the RNase PH family. In terms of assembly, component of the RNA exosome core complex (Exo-9), composed of EXOSC1, EXOSC2, EXOSC3, EXOSC4, EXOSC5, EXOSC6, EXOSC7, EXOSC8 and EXOSC9; within the complex interacts with EXOSC3, EXOSC4, EXOSC5 and DIS3. The catalytically inactive RNA exosome core complex (Exo-9) associates with the catalytic subunit EXOSC10/RRP6. Exo-9 may associate with DIS3 to form the nucleolar exosome complex, or DIS3L to form the cytoplasmic exosome complex. Exo-9 is formed by a hexameric base ring consisting of the heterodimers EXOSC4-EXOSC9, EXOSC5-EXOSC8 and EXOSC6-EXOSC7, and a cap ring consisting of EXOSC1, EXOSC2 and EXOSC3. The RNA exosome complex associates with cofactors C1D/RRP47, MPHOSPH6/MPP6 and MTREX/MTR4. Interacts (via C-terminus region) with SETX (via N-terminus domain); the interaction enhances SETX sumoylation. Interacts with DIS3; the interaction is direct.

It localises to the cytoplasm. The protein resides in the nucleus. It is found in the nucleolus. Its subcellular location is the nucleoplasm. Non-catalytic component of the RNA exosome complex which has 3'-&gt;5' exoribonuclease activity and participates in a multitude of cellular RNA processing and degradation events. In the nucleus, the RNA exosome complex is involved in proper maturation of stable RNA species such as rRNA, snRNA and snoRNA, in the elimination of RNA processing by-products and non-coding 'pervasive' transcripts, such as antisense RNA species and promoter-upstream transcripts (PROMPTs), and of mRNAs with processing defects, thereby limiting or excluding their export to the cytoplasm. The RNA exosome may be involved in Ig class switch recombination (CSR) and/or Ig variable region somatic hypermutation (SHM) by targeting AICDA deamination activity to transcribed dsDNA substrates. In the cytoplasm, the RNA exosome complex is involved in general mRNA turnover and specifically degrades inherently unstable mRNAs containing AU-rich elements (AREs) within their 3' untranslated regions, and in RNA surveillance pathways, preventing translation of aberrant mRNAs. It seems to be involved in degradation of histone mRNA. The catalytic inactive RNA exosome core complex of 9 subunits (Exo-9) is proposed to play a pivotal role in the binding and presentation of RNA for ribonucleolysis, and to serve as a scaffold for the association with catalytic subunits and accessory proteins or complexes. EXOSC9 binds to ARE-containing RNAs. This Mus musculus (Mouse) protein is Exosome complex component RRP45 (Exosc9).